We begin with the raw amino-acid sequence, 91 residues long: Elongation factor 1-beta (91 aa).

This sequence belongs to the EF-1-beta/EF-1-delta family.

Functionally, promotes the exchange of GDP for GTP in EF-1-alpha/GDP, thus allowing the regeneration of EF-1-alpha/GTP that could then be used to form the ternary complex EF-1-alpha/GTP/AAtRNA. In Saccharolobus islandicus (strain Y.N.15.51 / Yellowstone #2) (Sulfolobus islandicus), this protein is Elongation factor 1-beta.